The chain runs to 105 residues: uncharacterized protein (105 aa).

One can recognise an ABM domain in the interval 14 to 104 (HYITACLKII…VEWLMKSNVN (91 aa)).

This is an uncharacterized protein from Bacillus subtilis (strain 168).